We begin with the raw amino-acid sequence, 403 residues long: Serine/threonine transporter SstT (403 aa).

9 consecutive transmembrane segments (helical) span residues V14–I34, V44–S64, I79–M99, A138–L158, G175–V195, L214–F234, M295–I315, V327–I347, and L353–V373.

The protein belongs to the dicarboxylate/amino acid:cation symporter (DAACS) (TC 2.A.23) family.

It is found in the cell inner membrane. It carries out the reaction L-serine(in) + Na(+)(in) = L-serine(out) + Na(+)(out). The enzyme catalyses L-threonine(in) + Na(+)(in) = L-threonine(out) + Na(+)(out). Functionally, involved in the import of serine and threonine into the cell, with the concomitant import of sodium (symport system). This is Serine/threonine transporter SstT from Pseudomonas putida (strain ATCC 47054 / DSM 6125 / CFBP 8728 / NCIMB 11950 / KT2440).